Reading from the N-terminus, the 214-residue chain is Protein PAM68, chloroplastic (214 aa).

2 disordered regions span residues M1 to Q26 and A62 to V111. The N-terminal 35 residues, M1–R35, are a transit peptide targeting the chloroplast. The Stromal portion of the chain corresponds to D36 to M124. A compositionally biased stretch (basic residues) spans K75 to K84. Positions S89–E106 are enriched in acidic residues. Residues G125 to L145 traverse the membrane as a helical segment. Residues K146–D152 lie on the Lumenal, thylakoid side of the membrane. Residues V153–V173 traverse the membrane as a helical segment. Residues S174–R214 lie on the Stromal side of the membrane.

Interacts with the PSII subunits psbA, psbB, psbC, psbD, psbH and psbI, but not with psbE, psbF or psbO. Interacts with the PSII assembly factors HCF136, LPA1, LPA2 and ALB3.

It is found in the plastid. Its subcellular location is the chloroplast thylakoid membrane. In terms of biological role, involved in early steps in photosystem II (PSII) biogenesis and in maturation and stability of newly synthesized psbA protein. In Arabidopsis thaliana (Mouse-ear cress), this protein is Protein PAM68, chloroplastic (PAM68).